We begin with the raw amino-acid sequence, 173 residues long: Ribulose bisphosphate carboxylase small subunit, chloroplastic 7 (173 aa).

A chloroplast-targeting transit peptide spans 1-49 (MASIPATVATVAQANMVAPFTGLKSNAAFPVTKKVNDFSTLASNGGRVQ).

The protein belongs to the RuBisCO small chain family. Heterohexadecamer of 8 large and 8 small subunits.

It is found in the plastid. It localises to the chloroplast. Functionally, ruBisCO catalyzes two reactions: the carboxylation of D-ribulose 1,5-bisphosphate, the primary event in carbon dioxide fixation, as well as the oxidative fragmentation of the pentose substrate. Both reactions occur simultaneously and in competition at the same active site. Although the small subunit is not catalytic it is essential for maximal activity. The polypeptide is Ribulose bisphosphate carboxylase small subunit, chloroplastic 7 (Flaveria pringlei).